Consider the following 312-residue polypeptide: Olfactory receptor 8K3 (312 aa).

Over 1–25 (MEQHNLTTVNEFILTGITDIAELQA) the chain is Extracellular. An N-linked (GlcNAc...) asparagine glycan is attached at asparagine 5. A helical membrane pass occupies residues 26-46 (PLFALFLMIYVISVMGNLGMI). At 47–54 (VLTKLDSR) the chain is on the cytoplasmic side. A helical membrane pass occupies residues 55 to 75 (LQTPMYFFLRHLAFMDLGYST). Topologically, residues 76–99 (TVGPKMLVNFVVDKNIISYYFCAT) are extracellular. Cysteine 97 and cysteine 189 are oxidised to a cystine. The chain crosses the membrane as a helical span at residues 100 to 120 (QLAFFLVFIGSELFILSAMSY). Topologically, residues 121-139 (DLYVAICNPLLYTVIMSRR) are cytoplasmic. A helical membrane pass occupies residues 140–160 (VCQVLVAIPYLYCTFISLLVT). Over 161 to 197 (IKIFTLSFCGYNVISHFYCDSLPLLPLLCSNTHEIEL) the chain is Extracellular. A helical membrane pass occupies residues 198–217 (IILIFAAIDLISSLLIVLLS). The Cytoplasmic segment spans residues 218–236 (YLLILVAILRMNSAGRQKA). The chain crosses the membrane as a helical span at residues 237–257 (FSTCGAHLTVVIVFYGTLLFM). At 258-270 (YVQPKSSHSFDTD) the chain is on the extracellular side. Residues 271–291 (KVASIFYTLVIPMLNPLIYSL) traverse the membrane as a helical segment. Over 292 to 312 (RNKDVKYALRRTWNNLCNIFV) the chain is Cytoplasmic.

Belongs to the G-protein coupled receptor 1 family.

It localises to the cell membrane. Its function is as follows. Odorant receptor. In Homo sapiens (Human), this protein is Olfactory receptor 8K3 (OR8K3).